A 703-amino-acid polypeptide reads, in one-letter code: Collagen alpha-2(VIII) chain (703 aa).

Residues 1-28 (MLGTLTPLSSLLLLLLVLVLGCGPRASS) form the signal peptide. The interval 29-76 (GGGAGGAAGYAPVKYIQPMQKGPVGPPFREGKGQYLEMPLPLLPMDLK) is nonhelical region (NC2). A disordered region spans residues 70 to 544 (LLPMDLKGEP…AFDETGIAGL (475 aa)). The interval 77-536 (GEPGPPGKPG…PGPPGAPGAF (460 aa)) is triple-helical region. Residues 79-97 (PGPPGKPGPRGPPGPPGFP) are compositionally biased toward pro residues. A compositionally biased stretch (low complexity) spans 166–192 (PSGITIPGKPGAQGVPGPPGFQGEPGP). Residues 206–224 (GDNGVGQPGLPGAPGQGGA) are compositionally biased toward gly residues. Low complexity-rich tracts occupy residues 265-275 (EPGAVGPKGPP) and 285-297 (AAGL…PSGA). A compositionally biased stretch (gly residues) spans 433 to 442 (GRPGGPGVAG). Low complexity-rich tracts occupy residues 444 to 462 (LGQK…RGPS) and 476 to 486 (PQGLPGLKGEP). The segment covering 506–532 (TGPPGVPGSPGITGPPGPPGPPGPPGA) has biased composition (pro residues). Residues 537-703 (DETGIAGLHL…SFSGFLLCPT (167 aa)) form a nonhelical region (NC1) region. The 134-residue stretch at 570 to 703 (SAHATPAFTA…SFSGFLLCPT (134 aa)) folds into the C1q domain.

In terms of assembly, homotrimers, or heterotrimers in association with alpha 2(VIII) type collagens. Four homotrimers can form a tetrahedron stabilized by central interacting C-terminal NC1 trimers. Proteolytically cleaved by neutrophil elastase, in vitro. Post-translationally, prolines at the third position of the tripeptide repeating unit (G-X-Y) are hydroxylated in some or all of the chains. Expressed primarily in the subendothelium of large blood vessels. Also expressed in arterioles and venules in muscle, heart, kidney, spleen, umbilical cord, liver and lung and is also found in connective tissue layers around hair follicles, around nerve bundles in muscle, in the dura of the optic nerve, in cornea and sclera, and in the perichondrium of cartilaginous tissues. In the kidney, expressed in mesangial cells, glomerular endothelial cells, and tubular epithelial cells. Also expressed in mast cells, and in astrocytes during the repair process. Expressed in Descemet's membrane.

The protein resides in the secreted. It is found in the extracellular space. It localises to the extracellular matrix. The protein localises to the basement membrane. Its function is as follows. Macromolecular component of the subendothelium. Major component of the Descemet's membrane (basement membrane) of corneal endothelial cells. Also a component of the endothelia of blood vessels. Necessary for migration and proliferation of vascular smooth muscle cells and thus, has a potential role in the maintenance of vessel wall integrity and structure, in particular in atherogenesis. In Homo sapiens (Human), this protein is Collagen alpha-2(VIII) chain (COL8A2).